Here is a 291-residue protein sequence, read N- to C-terminus: Zinc transporter ZupT (291 aa).

Transmembrane regions (helical) follow at residues 8–28, 39–59, 74–94, 147–167, 174–194, 209–229, 233–253, and 271–291; these read IFIA…GSII, VLSL…FMEI, HWAE…SLLI, GIFT…ATFI, TLGI…GLAV, FIYS…GALI, FIGD…MVFI, and SLYG…LLGQ. Fe(2+) is bound by residues asparagine 158 and glutamate 161. Zn(2+) contacts are provided by glutamate 161 and histidine 186. Fe(2+) contacts are provided by asparagine 187, glutamate 190, and glutamate 219. Glutamate 190 provides a ligand contact to Zn(2+).

This sequence belongs to the ZIP transporter (TC 2.A.5) family. ZupT subfamily.

The protein localises to the cell inner membrane. The catalysed reaction is Zn(2+)(in) = Zn(2+)(out). Mediates zinc uptake. May also transport other divalent cations. This Campylobacter jejuni subsp. jejuni serotype O:2 (strain ATCC 700819 / NCTC 11168) protein is Zinc transporter ZupT.